The primary structure comprises 652 residues: DNA ligase (652 aa).

NAD(+) contacts are provided by residues 29 to 33 (DSDYD), 78 to 79 (SL), and E107. K109 acts as the N6-AMP-lysine intermediate in catalysis. NAD(+)-binding residues include R130, E164, K278, and K302. 4 residues coordinate Zn(2+): C395, C398, C413, and C418. A BRCT domain is found at 577–652 (NSDAALFGLT…IEDEDWLRQL (76 aa)).

Belongs to the NAD-dependent DNA ligase family. LigA subfamily. Mg(2+) serves as cofactor. Mn(2+) is required as a cofactor.

It carries out the reaction NAD(+) + (deoxyribonucleotide)n-3'-hydroxyl + 5'-phospho-(deoxyribonucleotide)m = (deoxyribonucleotide)n+m + AMP + beta-nicotinamide D-nucleotide.. DNA ligase that catalyzes the formation of phosphodiester linkages between 5'-phosphoryl and 3'-hydroxyl groups in double-stranded DNA using NAD as a coenzyme and as the energy source for the reaction. It is essential for DNA replication and repair of damaged DNA. The polypeptide is DNA ligase (Streptococcus pyogenes serotype M1).